Here is a 219-residue protein sequence, read N- to C-terminus: MQGAERGRMQMPDDRLEREAGGLVAGVDEVGRGPLAGPVVAAAVLLPASGFPAHLAGLIDDSKKLDAAARDRAFAALLAEPGITIGIGAASVTEIGRLNILHASMLAMRRAVERLPTIPDLALVDGNRAPALPCAARCVVGGDAKCLSIAAASIIAKVVRDRAMARLARRYPVYGWERNAGYPTPAHRAGLTEFGPTPHHRTAFGLVRQLLAMRMEAVV.

The RNase H type-2 domain occupies 22-219 (GLVAGVDEVG…LLAMRMEAVV (198 aa)). Residues aspartate 28, glutamate 29, and aspartate 125 each contribute to the a divalent metal cation site.

It belongs to the RNase HII family. Mn(2+) serves as cofactor. Requires Mg(2+) as cofactor.

It is found in the cytoplasm. The catalysed reaction is Endonucleolytic cleavage to 5'-phosphomonoester.. Functionally, endonuclease that specifically degrades the RNA of RNA-DNA hybrids. The sequence is that of Ribonuclease HII from Granulibacter bethesdensis (strain ATCC BAA-1260 / CGDNIH1).